The primary structure comprises 487 residues: Transcriptional adapter ADA2b (487 aa).

The span at 1 to 13 shows a compositional bias: polar residues; the sequence is MGRSRGNFQNFED. Residues 1-25 form a disordered region; it reads MGRSRGNFQNFEDPTQRTRKKKNAA. The ZZ-type zinc-finger motif lies at 42-98; sequence GGKYNCDYCQKDITGKIRIKCAVCPDFDLCIECMSVGAEITPHKCDHPYRVMGNLTF. Zn(2+) contacts are provided by C47, C50, C62, C65, C71, C74, H84, and H88. An SANT domain is found at 100–152; the sequence is LICPDWSADDEMLLLEGLEIYGLGNWAEVAEHVGTKSKEQCLEHYRNIYLNSP. K216 bears the N6-acetyllysine; by GCN5 mark. Positions 368-383 are enriched in basic and acidic residues; sequence RKRKRENEEGMNRGKE. The interval 368 to 388 is disordered; that stretch reads RKRKRENEEGMNRGKESGQFG. The SWIRM domain occupies 401 to 487; that stretch reads QASSSYVNDL…MLVKKGIAQL (87 aa).

Interacts in vitro with the HAT domain of GCN5 and with the DNA-binding domain of the transcriptional activator DREB1B/CBF1. Interacts with BZIP11. Acetylated in vitro by GCN5, but acetylation is not essential for biological activity. As to expression, expressed in roots, leaves, stems, flowers and siliques, with the strongest activity in the meristematic zones.

The protein resides in the nucleus. In terms of biological role, required for the function of some acidic activation domains, which activate transcription from a distant site. The exact mechanism of action is not yet known. ADA2 stimulates the acetyltransferase activity of GCN5 on free histones or nucleosomes, probably by opening up the promoter region. Mediates auxin and cytokinin signals in the control of cell proliferation and might be involved in repression of a freezing tolerance pathway at warm temperature. Involved in the positive regulation of salt-induced gene expression by maintaining locus-specific acetylation of histones H4 and H3. This is Transcriptional adapter ADA2b (ADA2B) from Arabidopsis thaliana (Mouse-ear cress).